A 499-amino-acid polypeptide reads, in one-letter code: Probable cytosol aminopeptidase (499 aa).

Mn(2+)-binding residues include Lys-263 and Asp-268. The active site involves Lys-275. Asp-286, Asp-345, and Glu-347 together coordinate Mn(2+). Arg-349 is a catalytic residue.

Belongs to the peptidase M17 family. It depends on Mn(2+) as a cofactor.

The protein resides in the cytoplasm. The enzyme catalyses Release of an N-terminal amino acid, Xaa-|-Yaa-, in which Xaa is preferably Leu, but may be other amino acids including Pro although not Arg or Lys, and Yaa may be Pro. Amino acid amides and methyl esters are also readily hydrolyzed, but rates on arylamides are exceedingly low.. It catalyses the reaction Release of an N-terminal amino acid, preferentially leucine, but not glutamic or aspartic acids.. In terms of biological role, presumably involved in the processing and regular turnover of intracellular proteins. Catalyzes the removal of unsubstituted N-terminal amino acids from various peptides. The chain is Probable cytosol aminopeptidase from Bradyrhizobium sp. (strain BTAi1 / ATCC BAA-1182).